A 653-amino-acid chain; its full sequence is Sodium-dependent phosphate transporter 2 (653 aa).

The Extracellular portion of the chain corresponds to 1–5 (MAIDG). The helical transmembrane segment at 6–26 (YLWMVILGFIIAFILAFSVGA) threads the bilayer. Over 27–46 (NDVANSFGTAVGSGVVTLRQ) the chain is Cytoplasmic. A helical membrane pass occupies residues 47-67 (ACILASIFETTGSVLLGAKVG). Residues 68-86 (ETIRKGIIDVNLYNETVET) lie on the Extracellular side of the membrane. An N-linked (GlcNAc...) asparagine glycan is attached at asparagine 81. The helical transmembrane segment at 87 to 107 (LMAGEVSAMVGSAVWQLIASF) threads the bilayer. Residues 108 to 109 (LR) lie on the Cytoplasmic side of the membrane. Residues 110-130 (LPISGTHCIVGSTIGFSLVAI) form a helical membrane-spanning segment. The Extracellular segment spans residues 131-142 (GTQGVQWMELVK). A helical membrane pass occupies residues 143 to 163 (IVASWFISPLLSGFMSGVLFI). Over 164–190 (LIRIFILKKEDPVPNGLRALPVFYAAT) the chain is Cytoplasmic. A helical transmembrane segment spans residues 191–211 (IAINVFSIMYTGAPVLGLVLP). Over 212–213 (IW) the chain is Extracellular. A helical transmembrane segment spans residues 214-234 (AIALISFGVALLFALFVWLFV). The Cytoplasmic segment spans residues 235 to 483 (CPWMRRKIAG…EEKEEKDTAE (249 aa)). A phosphoserine mark is found at serine 253, serine 256, serine 259, and serine 268. A disordered region spans residues 275 to 311 (PGAKANDDSTVPLTGSAGEPSGTSEGTSVGNHPRASY). Residues 295–304 (SGTSEGTSVG) show a composition bias toward polar residues. 2 positions are modified to phosphoserine: serine 316 and serine 385. A disordered region spans residues 459–478 (SELTDPDQPRDDPAEEEKEE). A helical transmembrane segment spans residues 484-504 (VHLLFHFLQVLTACFGSFAHG). Over 505–531 (GNDVSNAIGPLVALWLIYEQGAVLQEA) the chain is Extracellular. A helical membrane pass occupies residues 532–552 (VTPVWLLFYGGVGICTGLWVW). Residues 553-572 (GRRVIQTMGKDLTPITPSSG) lie on the Cytoplasmic side of the membrane. Residues 573–587 (FTIELASAFTVVIAS) traverse the membrane as a helical segment. The Extracellular portion of the chain corresponds to 588-594 (NVGLPVS). Residues 595-610 (TTHCKVGSVVAVGWIR) form a helical membrane-spanning segment. The Cytoplasmic portion of the chain corresponds to 611–622 (SRKAVDWRLFRN). The helical transmembrane segment at 623-643 (IFVAWFVTVPVAGLFSAAIMA) threads the bilayer. The Extracellular segment spans residues 644–653 (LLMYGILPYV).

This sequence belongs to the inorganic phosphate transporter (PiT) (TC 2.A.20) family. Homodimer.

The protein localises to the cell membrane. It is found in the apical cell membrane. The catalysed reaction is 2 Na(+)(out) + phosphate(out) = 2 Na(+)(in) + phosphate(in). Functionally, sodium-phosphate symporter which preferentially transports the monovalent form of phosphate with a stoichiometry of two sodium ions per phosphate ion. Plays a critical role in the determination of bone quality and strength by providing phosphate for bone mineralization. Required to maintain normal cerebrospinal fluid phosphate levels. Mediates phosphate-induced calcification of vascular smooth muscle cells (VCMCs) and can functionally compensate for loss of SLC20A1 in VCMCs. (Microbial infection) Functions as a retroviral receptor for feline leukemia virus subgroup B (FeLV-B). This is Sodium-dependent phosphate transporter 2 (SLC20A2) from Felis catus (Cat).